The following is a 422-amino-acid chain: Probable sucrose-phosphatase 2 (422 aa).

It belongs to the sucrose phosphatase family. In terms of assembly, homodimer. Mg(2+) is required as a cofactor.

The catalysed reaction is sucrose 6(F)-phosphate + H2O = sucrose + phosphate. The protein operates within glycan biosynthesis; sucrose biosynthesis; sucrose from D-fructose 6-phosphate and UDP-alpha-D-glucose: step 2/2. Catalyzes the final step of sucrose synthesis. The polypeptide is Probable sucrose-phosphatase 2 (SPP2) (Arabidopsis thaliana (Mouse-ear cress)).